The chain runs to 306 residues: Serine/threonine-protein kinase mug51 (306 aa).

Belongs to the STK19 family.

It catalyses the reaction L-seryl-[protein] + ATP = O-phospho-L-seryl-[protein] + ADP + H(+). It carries out the reaction L-threonyl-[protein] + ATP = O-phospho-L-threonyl-[protein] + ADP + H(+). Its function is as follows. Serine/threonine-protein kinase. Has a role in meiosis. This chain is Serine/threonine-protein kinase mug51 (mug51), found in Schizosaccharomyces pombe (strain 972 / ATCC 24843) (Fission yeast).